Consider the following 115-residue polypeptide: UPF0738 protein SE_0694 (115 aa).

The protein belongs to the UPF0738 family.

The sequence is that of UPF0738 protein SE_0694 from Staphylococcus epidermidis (strain ATCC 12228 / FDA PCI 1200).